The sequence spans 449 residues: Cyclin-B1-5 (449 aa).

Disordered stretches follow at residues 1 to 37 (MATRHQRAAAAPQPANRGAAVAAGKQKAAATAAAGRP) and 98 to 147 (PARK…GGSA). Composition is skewed to low complexity over residues 8-37 (AAAAPQPANRGAAVAAGKQKAAATAAAGRP) and 136-147 (SEGAGSSSGGSA).

The protein belongs to the cyclin family. Cyclin AB subfamily.

The polypeptide is Cyclin-B1-5 (CYCB1-5) (Oryza sativa subsp. japonica (Rice)).